A 359-amino-acid polypeptide reads, in one-letter code: MSDEGSRGSRLPLALPPASQGCSSGGGGGGSSAGGSGNSRPPRNLQGLLQMAITAGSEEPDPPPEPMSEERRQWLQEAMSAAFRGQREEVEQMKSCLRVLSQPMPPTAGEAEQAADQQEREGALELLADLCENMDNAADFCQLSGMHLLVGRYLEAGAAGLRWRAAQLIGTCSQNVAAIQEQVLGLGALRKLLRLLDRDACDTVRVKALFAISCLVREQEAGLLQFLRLDGFSVLMRAMQQQVQKLKVKSAFLLQNLLVGHPEHKGTLCSMGMVQQLVALVRTEHSPFHEHVLGALCSLVTDFPQGVRECREPELGLEELLRHRCQLLQQHEEYQEELEFCEKLLQTCFSSPADDSMDR.

The segment at 1–71 is disordered; that stretch reads MSDEGSRGSR…PPPEPMSEER (71 aa). Over residues 23–37 the composition is skewed to gly residues; that stretch reads SSGGGGGGSSAGGSG. ARM repeat units lie at residues 132-174, 177-217, 220-259, and 262-301; these read ENMD…TCSQ, AAIQ…CLVR, EAGLLQFLRLDGFSVLMRAMQQQVQKLKVKSAFLLQNLLV, and PEHKGTLCSMGMVQQLVALVRTEHSPFHEHVLGALCSLVT. Phosphoserine is present on residues Ser351 and Ser356.

In terms of assembly, interacts with the ATP-binding domain of HSPA1A. Detected in a ternary complex containing STUB1, HSPA1A and HSPBP1. Interacts with PGLYRP1; this interaction blocks the cytotoxic activity of the PGLYRP1-HSPA1A complex. Ubiquitous.

Its function is as follows. Inhibits HSPA1A chaperone activity by changing the conformation of the ATP-binding domain of HSPA1A and interfering with ATP binding. Interferes with ubiquitination mediated by STUB1 and inhibits chaperone-assisted degradation of immature CFTR. This Homo sapiens (Human) protein is Hsp70-binding protein 1.